Here is a 1745-residue protein sequence, read N- to C-terminus: Collagen alpha-3(V) chain (1745 aa).

Residues 1-29 (MGNRRDLGQPRAGLCLLLAALQLLPGTQA) form the signal peptide. Residues 62–224 (DRAFRIGQAS…QACERYLPDC (163 aa)) form the Laminin G-like domain. Residues N102 and N141 are each glycosylated (N-linked (GlcNAc...) asparagine). The nonhelical region stretch occupies residues 211–391 (QAAFQACERY…AVIEKGQQFE (181 aa)). Disordered stretches follow at residues 230 to 304 (AATV…TPTP), 322 to 362 (RSLD…EYPS), 387 to 439 (GQQF…RGPP), and 476 to 1492 (SMKG…PAEL). Over residues 244–267 (PRRKGKGKGRKKGRGRKGKGRKKN) the composition is skewed to basic residues. Residue S349 is glycosylated (O-linked (Xyl...) (chondroitin sulfate) serine). Collagen-like domains follow at residues 391-440 (EGPP…GPPG) and 482-538 (GPVG…DGAR). The tract at residues 392–1489 (GPPGAPGPQG…AGPPGPPGAP (1098 aa)) is triple-helical region. The span at 406 to 424 (SGPPGPPGFPGDPGPPGPA) shows a compositional bias: pro residues. Low complexity-rich tracts occupy residues 426 to 439 (LPGI…RGPP), 489 to 499 (RPGPVGLPGHP), and 597 to 619 (EPGP…PGVT). The segment covering 724 to 733 (QGEKGEKGED) has biased composition (basic and acidic residues). A compositionally biased stretch (low complexity) spans 765–792 (PKGQAGQAGEEGPPGSAGEKGKLGVPGL). 3 Collagen-like domains span residues 824-877 (GQPG…QGPP), 905-950 (GFQG…GLPG), and 951-989 (LEGR…GDPG). Low complexity predominate over residues 967 to 979 (LGKEGPAGLRGFP). Gly residues predominate over residues 1016–1025 (GPAGGIGLPG). 2 stretches are compositionally biased toward low complexity: residues 1116 to 1126 (ADGAQGRRGPP) and 1141 to 1152 (VGVIGPPGLQGL). Residues 1190–1199 (GLPGGVGQPG) are compositionally biased toward gly residues. Positions 1213–1222 (PGPPGAPGIP) are enriched in pro residues. Residues 1234 to 1243 (SGPSGAAGPP) show a composition bias toward low complexity. Positions 1318–1330 (MGREGREGEKGAK) are enriched in basic and acidic residues. Residues 1405 to 1416 (IGLIGLIGPPGE) show a composition bias toward low complexity. Pro residues predominate over residues 1429 to 1443 (QGPPGPKGDPGPPGP). A Collagen-like 6 domain is found at 1430-1488 (GPPGPKGDPGPPGPIGSLGHPGPPGVAGPLGQKGSKGSPGSMGPRGDTGPAGPPGPPGA). Residues 1458–1479 (PLGQKGSKGSPGSMGPRGDTGP) show a composition bias toward low complexity. The 231-residue stretch at 1514 to 1744 (EEVLASLTSL…GFELGPVCFS (231 aa)) folds into the Fibrillar collagen NC1 domain. Intrachain disulfides connect C1585/C1742 and C1651/C1696.

The protein belongs to the fibrillar collagen family. As to quaternary structure, trimers of two alpha 1(V) and one alpha 2(V) chains in most tissues and trimers of one alpha 1(V), one alpha 2(V), and one alpha 3(V) chains in placenta. In terms of processing, prolines at the third position of the tripeptide repeating unit (G-X-Y) are hydroxylated in some or all of the chains. Detected in fibroblasts (at protein level). Detected in urine (at protein level).

It localises to the secreted. It is found in the extracellular space. The protein localises to the extracellular matrix. Type V collagen is a member of group I collagen (fibrillar forming collagen). It is a minor connective tissue component of nearly ubiquitous distribution. Type V collagen binds to DNA, heparan sulfate, thrombospondin, heparin, and insulin. The protein is Collagen alpha-3(V) chain (COL5A3) of Homo sapiens (Human).